The following is a 313-amino-acid chain: Olfactory receptor 2B6 (313 aa).

Residues 1 to 25 (MNWVNDSIIQEFILLGFSDRPWLEF) are Extracellular-facing. Residue N5 is glycosylated (N-linked (GlcNAc...) asparagine). The helical transmembrane segment at 26–49 (PLLVVFLISYTVTIFGNLTIILVS) threads the bilayer. The Cytoplasmic portion of the chain corresponds to 50–57 (RLDTKLHT). Residues 58–79 (PMYFFLTNLSLLDLCYTTCTVP) form a helical membrane-spanning segment. The Extracellular portion of the chain corresponds to 80–100 (QMLVNLCSIRKVISYRGCVAQ). A disulfide bond links C97 and C189. The helical transmembrane segment at 101–120 (LFIFLALGATEYLLLAVMSF) threads the bilayer. Residues 121 to 139 (DRFVAICRPLHYSVIMHQR) are Cytoplasmic-facing. The chain crosses the membrane as a helical span at residues 140–158 (LCLQLAAASWVTGFSNSVW). The Extracellular segment spans residues 159 to 195 (LSTLTLQLPLCDPYVIDHFLCEVPALLKLSCVETTAN). A helical membrane pass occupies residues 196-219 (EAELFLVSELFHLIPLTLILISYA). The Cytoplasmic segment spans residues 220-236 (FIVRAVLRIQSAEGRQK). A helical membrane pass occupies residues 237–259 (AFGTCGSHLIVVSLFYSTAVSVY). The Extracellular segment spans residues 260-272 (LQPPSPSSKDQGK). A helical membrane pass occupies residues 273 to 292 (MVSLFYGIIAPMLNPLIYTL). At 293–313 (RNKEVKEGFKRLVARVFLIKK) the chain is on the cytoplasmic side.

Belongs to the G-protein coupled receptor 1 family.

Its subcellular location is the cell membrane. In terms of biological role, odorant receptor. In Homo sapiens (Human), this protein is Olfactory receptor 2B6.